The primary structure comprises 336 residues: Transmembrane protein 19 (336 aa).

A run of 6 helical transmembrane segments spans residues Met15–Ile35, Ile49–Leu69, Val84–Phe104, Val218–Phe238, Ile257–Ala277, and Val313–Trp333.

It belongs to the TMEM19 family.

The protein resides in the membrane. The chain is Transmembrane protein 19 (TMEM19) from Homo sapiens (Human).